Reading from the N-terminus, the 90-residue chain is Small ribosomal subunit protein uS15 (90 aa).

The protein belongs to the universal ribosomal protein uS15 family. Part of the 30S ribosomal subunit. Forms a bridge to the 50S subunit in the 70S ribosome, contacting the 23S rRNA.

One of the primary rRNA binding proteins, it binds directly to 16S rRNA where it helps nucleate assembly of the platform of the 30S subunit by binding and bridging several RNA helices of the 16S rRNA. In terms of biological role, forms an intersubunit bridge (bridge B4) with the 23S rRNA of the 50S subunit in the ribosome. The polypeptide is Small ribosomal subunit protein uS15 (Campylobacter fetus subsp. fetus (strain 82-40)).